A 355-amino-acid chain; its full sequence is MAEITAQLVKQLREMTDAGMMDCKKALVETDGDIEKAVEYLREKGLSKAAKKADRVASEGVVSVEVASDFSKASLLEINSETDFVAKNEQFKELVAKTSKLVHDHALSSTETLHTVSVDGMEFSEYLQQNIAKIGENIVVRRIVTLETKRGAIVNGYVHSNGRVGVLIGIKFGKEGSKSACVELARNLCMHAAAMKPQVLSYEELDPEFITKEKVALIAELEKENEELKRLGKPLHRIPEYISRSELTPSVLKNQEQKLREELKAQGKPEAIWDKIVPGQLERFIADSTLIDQRLTLLGQFYVMDDKKTIAQVLEAKGKELDDSIEIVDYVRFELGEGIEKKACNFAEEVAAQLG.

An involved in Mg(2+) ion dislocation from EF-Tu region spans residues 82–85 (TDFV).

This sequence belongs to the EF-Ts family.

The protein localises to the cytoplasm. Its function is as follows. Associates with the EF-Tu.GDP complex and induces the exchange of GDP to GTP. It remains bound to the aminoacyl-tRNA.EF-Tu.GTP complex up to the GTP hydrolysis stage on the ribosome. This is Elongation factor Ts from Wolinella succinogenes (strain ATCC 29543 / DSM 1740 / CCUG 13145 / JCM 31913 / LMG 7466 / NCTC 11488 / FDC 602W) (Vibrio succinogenes).